The following is a 416-amino-acid chain: Nucleoside transporter 1 (416 aa).

Over residues Met1–Gly26 the composition is skewed to basic and acidic residues. The tract at residues Met1–Ser28 is disordered. At Met1 to Gln35 the chain is on the cytoplasmic side. A helical membrane pass occupies residues Phe36–Gly58. Residues Leu59 to Lys64 are Extracellular-facing. A helical transmembrane segment spans residues Tyr65–Val83. Residues Lys84–Lys87 are Cytoplasmic-facing. Residues Met88–Ala107 form a helical membrane-spanning segment. Topologically, residues His108 to Tyr119 are extracellular. The helical transmembrane segment at Cys120–Phe139 threads the bilayer. The Cytoplasmic portion of the chain corresponds to Ser140 to Asn148. The chain crosses the membrane as a helical span at residues Met149–Leu171. Residues Asp172–Lys187 are Extracellular-facing. A helical transmembrane segment spans residues Leu188–Leu210. At Glu211–Lys241 the chain is on the cytoplasmic side. A helical membrane pass occupies residues Ala242–Gly261. Topologically, residues His262 to Asp273 are extracellular. Residues Tyr274–Tyr292 traverse the membrane as a helical segment. The Cytoplasmic segment spans residues Pro293–Lys311. A helical membrane pass occupies residues Leu312–Ala331. The Extracellular segment spans residues Cys332–Gln343. A helical transmembrane segment spans residues Cys344–Val366. The Cytoplasmic segment spans residues Gln367–Thr380. The helical transmembrane segment at Ile381–Tyr403 threads the bilayer. Residues Asp404 to Pro416 lie on the Extracellular side of the membrane.

Belongs to the SLC29A/ENT transporter (TC 2.A.57) family.

The protein resides in the cell membrane. It catalyses the reaction inosine(in) = inosine(out). The enzyme catalyses adenosine(in) = adenosine(out). The catalysed reaction is hypoxanthine(out) = hypoxanthine(in). It carries out the reaction guanosine(in) = guanosine(out). It catalyses the reaction guanine(out) = guanine(in). The enzyme catalyses thymidine(in) = thymidine(out). The catalysed reaction is uridine(out) = uridine(in). It carries out the reaction uracil(in) = uracil(out). It catalyses the reaction thymine(out) = thymine(in). The enzyme catalyses adenine(out) = adenine(in). The catalysed reaction is cytosine(out) = cytosine(in). It carries out the reaction xanthine(out) = xanthine(in). Its function is as follows. Nucleoside and nucleobase transporter with a broad substrate specificity. This Plasmodium vivax (strain Salvador I) protein is Nucleoside transporter 1.